A 159-amino-acid chain; its full sequence is Nucleoside diphosphate kinase (159 aa).

6 residues coordinate ATP: lysine 13, phenylalanine 61, arginine 89, threonine 95, arginine 106, and asparagine 116. The active-site Pros-phosphohistidine intermediate is histidine 119.

Belongs to the NDK family. The cofactor is Mg(2+).

It localises to the cytoplasm. The enzyme catalyses a 2'-deoxyribonucleoside 5'-diphosphate + ATP = a 2'-deoxyribonucleoside 5'-triphosphate + ADP. It catalyses the reaction a ribonucleoside 5'-diphosphate + ATP = a ribonucleoside 5'-triphosphate + ADP. Functionally, major role in the synthesis of nucleoside triphosphates other than ATP. The ATP gamma phosphate is transferred to the NDP beta phosphate via a ping-pong mechanism, using a phosphorylated active-site intermediate. The polypeptide is Nucleoside diphosphate kinase (Halorubrum lacusprofundi (strain ATCC 49239 / DSM 5036 / JCM 8891 / ACAM 34)).